We begin with the raw amino-acid sequence, 113 residues long: Flagellar transcriptional regulator FlhD (113 aa).

It belongs to the FlhD family. Homodimer; disulfide-linked. Forms a heterohexamer composed of two FlhC and four FlhD subunits. Each FlhC binds a FlhD dimer, forming a heterotrimer, and a hexamer assembles by dimerization of two heterotrimers.

It localises to the cytoplasm. Its function is as follows. Functions in complex with FlhC as a master transcriptional regulator that regulates transcription of several flagellar and non-flagellar operons by binding to their promoter region. Activates expression of class 2 flagellar genes, including fliA, which is a flagellum-specific sigma factor that turns on the class 3 genes. Also regulates genes whose products function in a variety of physiological pathways. The polypeptide is Flagellar transcriptional regulator FlhD (Salmonella typhi).